The sequence spans 386 residues: MKKSFLFTSESVTEGHPDKMADQISDAVLDYIIERDKKARVACETLVSNGFCVIAGELKTSVYAPMQEIARKVVQEIGYTDALYGFDYRSAAVLNGIGEQSPDINQGVDREDGEIGAGDQGLMFGYACKETPSLMPLPIWLSHRLTEGLAKKRKDGTLPFLRPDGKSQVTVRYEDGKPVSIDTIVISTQHSPETQQSHLKDAVIEEIVQKVLPQEYLNDNIRYFVNPTGKFVIGGPQGDAGLTGRKIIVDTYGGSCPHGGGAFSGKDPSKVDRSAAYAARYVAKNLVASGVCDKAIVQVAYAIGVVEPVSILVDTQGTGKVEDSKLTECVKAVFRLTPKGIIESLDLLRPIYRKTAAYGHFGRELNEFSWEKTDKVEAIKDFCGIK.

Residue His-16 coordinates ATP. Asp-18 lines the Mg(2+) pocket. Glu-44 is a K(+) binding site. 2 residues coordinate L-methionine: Glu-57 and Gln-100. Residues Gln-100 to Arg-110 form a flexible loop region. ATP-binding positions include Asp-164–Lys-166, Lys-230–Phe-231, Asp-239, Arg-245–Lys-246, Ala-262, and Lys-266. An L-methionine-binding site is contributed by Asp-239. Lys-270 lines the L-methionine pocket.

Belongs to the AdoMet synthase family. Homotetramer; dimer of dimers. It depends on Mg(2+) as a cofactor. The cofactor is K(+).

The protein resides in the cytoplasm. It catalyses the reaction L-methionine + ATP + H2O = S-adenosyl-L-methionine + phosphate + diphosphate. Its pathway is amino-acid biosynthesis; S-adenosyl-L-methionine biosynthesis; S-adenosyl-L-methionine from L-methionine: step 1/1. Catalyzes the formation of S-adenosylmethionine (AdoMet) from methionine and ATP. The overall synthetic reaction is composed of two sequential steps, AdoMet formation and the subsequent tripolyphosphate hydrolysis which occurs prior to release of AdoMet from the enzyme. The sequence is that of S-adenosylmethionine synthase from Helicobacter hepaticus (strain ATCC 51449 / 3B1).